A 912-amino-acid polypeptide reads, in one-letter code: Transferrin-binding protein A (912 aa).

Positions 1-23 (MTKKPYFRLSIISCLLISCYVKA) are cleaved as a signal peptide. The TonB box motif lies at 50–57 (ETISVTAE). The 126-residue stretch at 63–188 (KDNEVTGLGK…LAGSVTFQSK (126 aa)) folds into the TBDR plug domain. A TBDR beta-barrel domain is found at 199–912 (SWGIQTKNAY…NYTLTLEMKF (714 aa)). A TonB C-terminal box motif is present at residues 895–912 (TRYAASGRNYTLTLEMKF).

This sequence belongs to the TonB-dependent receptor family.

It localises to the cell outer membrane. Functionally, haemophilus acquires iron by extracting it from serum transferrin (TF) in its human host. Acts as a transferrin receptor and is required for transferrin utilization. The protein is Transferrin-binding protein A of Haemophilus influenzae (strain ATCC 51907 / DSM 11121 / KW20 / Rd).